The following is a 373-amino-acid chain: Glutamine synthetase (373 aa).

Ala-2 is subject to N-acetylalanine. The interval 2–25 (ATSASSHLNKGIKQVYMALPQGDK) is required for glutamine-induced ubiquitination by CRL4(CRBN) and proteasomal degradation. 2 positions are modified to N6-acetyllysine: Lys-11 and Lys-14. A GS beta-grasp domain is found at 26 to 106 (VQAMYIWIDG…VFCEVFKYNR (81 aa)). Tyr-104 carries the post-translational modification Phosphotyrosine. In terms of domain architecture, GS catalytic spans 113–373 (LRHTCKRIMD…TGDEPFQYKN (261 aa)). Glu-134 contacts ATP. Mn(2+) is bound by residues Glu-134, Glu-136, Glu-196, and Glu-203. An ATP-binding site is contributed by 203–208 (EFQIGP). 246-247 (NW) lines the L-glutamate pocket. His-253 lines the Mn(2+) pocket. ATP is bound by residues 255–257 (NFS), Arg-319, and Arg-324. Arg-319 is an L-glutamate binding site. ADP is bound at residue 336 to 338 (YFE). Glu-338 lines the Mn(2+) pocket. Position 340 (Arg-340) interacts with L-glutamate. The residue at position 343 (Ser-343) is a Phosphoserine.

Belongs to the glutamine synthetase family. As to quaternary structure, decamer; composed of two pentamers. Interacts with PALMD. Interacts with RHOJ. Interacts with BEST2; this interaction tethers a fraction of GLUL to the membrane, causing a decrease of cytosolic glutamine synthase (GS) activity and inhibits the chloride channel activity of BEST2 by affecting the gating at the aperture in the absence of intracellular glutamate. Mg(2+) is required as a cofactor. The cofactor is Mn(2+). Post-translationally, palmitoylated; undergoes autopalmitoylation. Acetylated by EP300/p300; acetylation is stimulated by increased glutamine levels and promotes ubiquitin-mediated proteasomal degradation. In terms of processing, ubiquitinated by ZNRF1. Ubiquitinated by the DCX (DDB1-CUL4-X-box) E3 ubiquitin-protein ligase complex called CRL4(CRBN), leading to proteasomal degradation.

The protein resides in the cytoplasm. It localises to the cytosol. It is found in the microsome. Its subcellular location is the mitochondrion. The protein localises to the cell membrane. It carries out the reaction L-glutamate + NH4(+) + ATP = L-glutamine + ADP + phosphate + H(+). The enzyme catalyses L-cysteinyl-[protein] + hexadecanoyl-CoA = S-hexadecanoyl-L-cysteinyl-[protein] + CoA. Glutamine synthetase activity is inhibited by methionine sulfoximine (MSO). Functionally, glutamine synthetase that catalyzes the ATP-dependent conversion of glutamate and ammonia to glutamine. Its role depends on tissue localization: in the brain, it regulates the levels of toxic ammonia and converts neurotoxic glutamate to harmless glutamine, whereas in the liver, it is one of the enzymes responsible for the removal of ammonia. Plays a key role in ammonium detoxification during erythropoiesis: the glutamine synthetase activity is required to remove ammonium generated by porphobilinogen deaminase (HMBS) during heme biosynthesis to prevent ammonium accumulation and oxidative stress. Essential for proliferation of fetal skin fibroblasts. Independently of its glutamine synthetase activity, required for endothelial cell migration during vascular development. Involved in angiogenesis by regulating membrane localization and activation of the GTPase RHOJ, possibly by promoting RHOJ palmitoylation. May act as a palmitoyltransferase for RHOJ: able to autopalmitoylate and then transfer the palmitoyl group to RHOJ. Plays a role in ribosomal 40S subunit biogenesis. Through the interaction with BEST2, inhibits BEST2 channel activity by affecting the gating at the aperture in the absence of intracellular L-glutamate, but sensitizes BEST2 to intracellular L-glutamate, which promotes the opening of BEST2 and thus relieves its inhibitory effect on BEST2. In Bos taurus (Bovine), this protein is Glutamine synthetase.